Here is a 157-residue protein sequence, read N- to C-terminus: Phosphopantetheine adenylyltransferase (157 aa).

Ser-9 provides a ligand contact to substrate. Residues 9-10 (SF) and His-17 each bind ATP. Substrate contacts are provided by Lys-41, Leu-74, and Lys-88. ATP is bound by residues 89–91 (GLR), Glu-99, and 123–129 (YTHVSSS).

The protein belongs to the bacterial CoaD family. Homohexamer. Requires Mg(2+) as cofactor.

It is found in the cytoplasm. It carries out the reaction (R)-4'-phosphopantetheine + ATP + H(+) = 3'-dephospho-CoA + diphosphate. It functions in the pathway cofactor biosynthesis; coenzyme A biosynthesis; CoA from (R)-pantothenate: step 4/5. Its function is as follows. Reversibly transfers an adenylyl group from ATP to 4'-phosphopantetheine, yielding dephospho-CoA (dPCoA) and pyrophosphate. The protein is Phosphopantetheine adenylyltransferase of Micrococcus luteus (strain ATCC 4698 / DSM 20030 / JCM 1464 / CCM 169 / CCUG 5858 / IAM 1056 / NBRC 3333 / NCIMB 9278 / NCTC 2665 / VKM Ac-2230) (Micrococcus lysodeikticus).